A 376-amino-acid chain; its full sequence is Succinyl-diaminopimelate desuccinylase (376 aa).

Histidine 66 lines the Zn(2+) pocket. Aspartate 68 is an active-site residue. Aspartate 99 contacts Zn(2+). The active-site Proton acceptor is glutamate 133. Positions 134, 162, and 348 each coordinate Zn(2+).

This sequence belongs to the peptidase M20A family. DapE subfamily. Homodimer. Zn(2+) serves as cofactor. It depends on Co(2+) as a cofactor.

It catalyses the reaction N-succinyl-(2S,6S)-2,6-diaminopimelate + H2O = (2S,6S)-2,6-diaminopimelate + succinate. The protein operates within amino-acid biosynthesis; L-lysine biosynthesis via DAP pathway; LL-2,6-diaminopimelate from (S)-tetrahydrodipicolinate (succinylase route): step 3/3. In terms of biological role, catalyzes the hydrolysis of N-succinyl-L,L-diaminopimelic acid (SDAP), forming succinate and LL-2,6-diaminopimelate (DAP), an intermediate involved in the bacterial biosynthesis of lysine and meso-diaminopimelic acid, an essential component of bacterial cell walls. This Xanthomonas euvesicatoria pv. vesicatoria (strain 85-10) (Xanthomonas campestris pv. vesicatoria) protein is Succinyl-diaminopimelate desuccinylase.